The primary structure comprises 394 residues: Obg-like ATPase 1 (394 aa).

Positions 25-282 constitute an OBG-type G domain; that stretch reads LKIGIVGLPN…MPPDEAAKYC (258 aa). Residues 34–39, 56–60, and 94–97 each bind ATP; these read NVGKST, FCTID, and DIAG. 34–39 is a GTP binding site; that stretch reads NVGKST. 2 residues coordinate Mg(2+): serine 38 and threonine 58. The GTP site is built by phenylalanine 129 and asparagine 230. ATP-binding positions include 230-231, methionine 231, and 263-265; these read NM and SCA. 263-265 is a GTP binding site; it reads SCA. The TGS domain maps to 303–386; that stretch reads HLIYFFTAGP…QDGDIIFFKF (84 aa).

It belongs to the TRAFAC class OBG-HflX-like GTPase superfamily. OBG GTPase family. YchF/OLA1 subfamily. In terms of assembly, monomer (Potential). Interacts with GAP1. It depends on Mg(2+) as a cofactor.

Its subcellular location is the cell membrane. The protein resides in the cytoplasm. The protein localises to the cytosol. Activated by GAP1. Functionally, hydrolyzes ATP, and can also hydrolyze GTP with lower efficiency. Has lower affinity for GTP (Potential). Exhibits GTPase activity. Exhibits similar binding affinities and hydrolytic activities toward both GTP and ATP. Binds to the 26 S ribosomal RNA in vitro, but not to the 5.8 S or 18 S rRNA. Confers sensitivity to salinity stress by suppressing the anti-oxidation enzymatic activities and increasing lipid peroxidation thus leading to the accumulation of reactive oxygen species (ROS). The sequence is that of Obg-like ATPase 1 from Oryza sativa subsp. japonica (Rice).